The primary structure comprises 117 residues: Cell division protein FtsB (117 aa).

The Cytoplasmic portion of the chain corresponds to 1 to 6; the sequence is MRDWRW. A helical membrane pass occupies residues 7-24; the sequence is MLLVLALLLGWLQYRFWF. At 25–117 the chain is on the periplasmic side; it reads GPGNSGEVMM…QVGDHPADVP (93 aa). The stretch at 29 to 69 forms a coiled coil; sequence SGEVMMLEAQVANQERDNEGLQQRNDALAAEVKDLKEGQSA.

Belongs to the FtsB family. As to quaternary structure, part of a complex composed of FtsB, FtsL and FtsQ.

The protein resides in the cell inner membrane. Its function is as follows. Essential cell division protein. May link together the upstream cell division proteins, which are predominantly cytoplasmic, with the downstream cell division proteins, which are predominantly periplasmic. In Stenotrophomonas maltophilia (strain K279a), this protein is Cell division protein FtsB.